We begin with the raw amino-acid sequence, 167 residues long: Ribonuclease H (167 aa).

In terms of domain architecture, RNase H type-1 spans 1–143 (MYKQIEIFTD…CDQLARKAAK (143 aa)). Mg(2+) contacts are provided by Asp-10, Glu-48, Asp-70, and Asp-135.

Belongs to the RNase H family. Monomer. Mg(2+) serves as cofactor.

It localises to the cytoplasm. It carries out the reaction Endonucleolytic cleavage to 5'-phosphomonoester.. Functionally, endonuclease that specifically degrades the RNA of RNA-DNA hybrids. The sequence is that of Ribonuclease H from Blochmanniella floridana.